We begin with the raw amino-acid sequence, 450 residues long: MNASDTIAAVATAVAPGQGGIAVVRVSGPAAEATGRSVVHCPGRQVCGSHRVMYGHVIDGEGRRLDEVLLLLMRGPRSFTGEDVVEIHCHGGVVAVQQVLERVLAHPGVRRALPGEFSQRAVLNGRLDLTRAEAVSELVAARSRRAAELAMAGLDGGIQAKITALRERLLDQLTELEARVDFEEDLPPLDGDALLDGLQQVRQALLTLVADGERADALRSGLRVALVGRPNVGKSSLLNRLSRRERAIVTELPGTTRDLLESEIVLEGVPITLLDTAGIRSTDDAVEQLGIARSEEALATADVVLLVLDGHAGWTAEDAALLARIPEHIPRILVANKADLPAGALPQPVDVQLSALEGTGEEDLVQALLERCGAAGTEGVLLALNERQRDLAATAAAALGRSQEVAAQQLPWDFWTIDLREAIRALGEITGEELTEAVLDRVFSRFCIGK.

(6S)-5-formyl-5,6,7,8-tetrahydrofolate-binding residues include arginine 25, glutamate 86, and arginine 126. The TrmE-type G domain occupies 221–373 (GLRVALVGRP…LVQALLERCG (153 aa)). Asparagine 231 lines the K(+) pocket. GTP-binding positions include 231-236 (NVGKSS), 250-256 (TELPGTT), 275-278 (DTAG), and 336-339 (NKAD). Residue serine 235 coordinates Mg(2+). K(+) is bound by residues threonine 250, leucine 252, and threonine 255. Threonine 256 lines the Mg(2+) pocket. (6S)-5-formyl-5,6,7,8-tetrahydrofolate is bound at residue lysine 450.

It belongs to the TRAFAC class TrmE-Era-EngA-EngB-Septin-like GTPase superfamily. TrmE GTPase family. In terms of assembly, homodimer. Heterotetramer of two MnmE and two MnmG subunits. It depends on K(+) as a cofactor.

It is found in the cytoplasm. Exhibits a very high intrinsic GTPase hydrolysis rate. Involved in the addition of a carboxymethylaminomethyl (cmnm) group at the wobble position (U34) of certain tRNAs, forming tRNA-cmnm(5)s(2)U34. This is tRNA modification GTPase MnmE from Parasynechococcus marenigrum (strain WH8102).